The sequence spans 286 residues: Phycobilisome 32.1 kDa linker polypeptide, phycocyanin-associated, rod (286 aa).

Positions Ala2–Arg180 constitute a PBS-linker domain. The 53-residue stretch at Asp234–Ala286 folds into the CpcD-like domain.

Belongs to the phycobilisome linker protein family. Associated with the phycobilisome, a hemidiscoidal structure that is composed of two distinct substructures: a core complex and a number of rods radiating from the core.

The protein resides in the cellular thylakoid membrane. Rod linker protein, associated with phycocyanin. Linker polypeptides determine the state of aggregation and the location of the disk-shaped phycobiliprotein units within the phycobilisome and modulate their spectroscopic properties in order to mediate a directed and optimal energy transfer. In Nostoc sp. (strain PCC 7120 / SAG 25.82 / UTEX 2576), this protein is Phycobilisome 32.1 kDa linker polypeptide, phycocyanin-associated, rod (cpcC).